The chain runs to 634 residues: tRNA uridine 5-carboxymethylaminomethyl modification enzyme MnmG (634 aa).

An FAD-binding site is contributed by 14 to 19 (GGGHAG). 279 to 293 (GPRYCPSIEDKVVRF) is an NAD(+) binding site.

Belongs to the MnmG family. Homodimer. Heterotetramer of two MnmE and two MnmG subunits. The cofactor is FAD.

The protein localises to the cytoplasm. Its function is as follows. NAD-binding protein involved in the addition of a carboxymethylaminomethyl (cmnm) group at the wobble position (U34) of certain tRNAs, forming tRNA-cmnm(5)s(2)U34. The polypeptide is tRNA uridine 5-carboxymethylaminomethyl modification enzyme MnmG (Xanthomonas campestris pv. campestris (strain B100)).